Consider the following 182-residue polypeptide: CDP-diacylglycerol--glycerol-3-phosphate 3-phosphatidyltransferase (182 aa).

Over 2-12 (QFNIPTLLTLF) the chain is Cytoplasmic. A helical membrane pass occupies residues 13–37 (RVALIPFFVLAFYLPFVWAPLLCAL). Residues 38–60 (IFVFAAVTDWFDGFLARRWKQTT) are Periplasmic-facing. A helical membrane pass occupies residues 61 to 81 (RFGAFLDPVADKVMVAVALVL). Over 82–86 (VAEYY) the chain is Cytoplasmic. A helical membrane pass occupies residues 87-107 (HSWWITLPAATMIAREIIISA). At 108-145 (LREWMAEIGKRSSVAVSWIGKVKTTAQMMALFALLWRP) the chain is on the periplasmic side. A helical transmembrane segment spans residues 146–168 (ERIVEGIGVAALYIAAVLTFWSM). Over 169–181 (FQYLNAARHDLLE) the chain is Cytoplasmic.

The protein belongs to the CDP-alcohol phosphatidyltransferase class-I family.

The protein localises to the cell inner membrane. It carries out the reaction a CDP-1,2-diacyl-sn-glycerol + sn-glycerol 3-phosphate = a 1,2-diacyl-sn-glycero-3-phospho-(1'-sn-glycero-3'-phosphate) + CMP + H(+). Its pathway is phospholipid metabolism; phosphatidylglycerol biosynthesis; phosphatidylglycerol from CDP-diacylglycerol: step 1/2. Functionally, catalyzes the conversion of cytidine diphosphate diacylglycerol (CDP-DG) and glycerol 3-phosphate into phosphatidylglycerol. Essential for the synthesis of anionic phospholipids, thereby playing a role in balancing the ratio of zwitterionic and anionic phospholipids, which is thought to be important for normal membrane function. This chain is CDP-diacylglycerol--glycerol-3-phosphate 3-phosphatidyltransferase, found in Pectobacterium atrosepticum (strain SCRI 1043 / ATCC BAA-672) (Erwinia carotovora subsp. atroseptica).